Here is a 1131-residue protein sequence, read N- to C-terminus: MTDVSSPAGGAASPVEMATSSSSAATTLTNGANKTAISTAAGVAPGAVPGPGSAAIPASSSSGNQVKLEHHHRQSNNNRPAATNRSSETKLRSPAGESDGASRLMTPAGSSSTPSQSPSPSQSPSQASIQTQTSQQDRLAKASTTASQQDVDEVARLFEEKPEAFEKWLTERAPPEALSRLQEFIENRKPHKRPSVTSDLFQQWMAASPTVQQKSPRSLSNSSASSIPECRRHLMDLDEGELFMELIRDVANELDIDVLCHKILVNVGLLTHADRGSLFLAKGTPTNKYLVAKLFDVTQKTALKDAVTRASAEEIIIPFGIGIAGMVAQTKQMINIKEAYKDARFNCEIDLKTGYKTNAILCMPICNYEGDIIGVAQIINKTNGGCFKGCMEFDEHDVEIFRRYLTFCGIGIQNAQLFEMSVQEYRRNQILLNLARSIFEEQNNLECLVTKIMTEARELLKCERCSVFLVDLDCCEASHLEKIIEKPNQPATRAIKSADSFEEKKMRNRFTVLFELGGEYQAANVSRPSVSELSSSTLAQIAQFVATTGQTVNICDVIEWVRDHNQIRAEDEIDSTQAILCMPIMNAQKKVIGVAQLINKANGVPFTDSDASIFEAFAIFCGLGIHNTQMYENACKLMAKQKVALECLSYHATASQDQTEKLTQDVIAEAESYNLYSFTFTDFELVDDDTCRAVLRMFMQCNLVSQFQIPYDVLCRWVLSVRKNYRPVKYHNWRHALNVAQTMFAMLKTGKMERFMTDLEILGLLVACLCHDLDHRGTNNAFQTKTESPLAILYTTSTMEHHHFDQCVMILNSEGNNIFQALSPEDYRSVMKTVESAILSTDLAMYFKKRNAFLELVENGEFDWQGEEKKDLLCGMMMTACDVSAIAKPWEVQHKVAKLVADEFFDQGDLEKLQLNTQPVAMMDRERKDELPKMQVGFIDVICLPLYRVLCDTFPWITPLYEGTLENRRNWQDLAEKVEMGLTWIDHDTIDKPVEEFAACADEEIKDIEFTVTTLNCNQQSQHGSEDSHTPEHQRSGSRLSMKKTGALGKAVRSKLSKTLYNSMDGSKPKTSLKLLESHVSEDMDDKSPTSPSQPQASGSMGRMSASSSTSSAGGQMVDKSKKRSKLCALL.

Disordered regions lie at residues Met1–Thr26 and Gly42–Asp150. Residues Gly42–Gly63 show a composition bias toward low complexity. The segment covering Ser75–Ser86 has biased composition (polar residues). Over residues Ser110 to Gln136 the composition is skewed to low complexity. GAF domains follow at residues Asp255–Ile412 and Asn444–Ile625. The PDEase domain occupies Ser655 to Val978. His731 functions as the Proton donor in the catalytic mechanism. A divalent metal cation contacts are provided by His735, His771, Asp772, and Asp882. Disordered regions lie at residues Gln1019 to Leu1048 and Ser1078 to Leu1131. Basic and acidic residues-rich tracts occupy residues Gly1024–Arg1035 and Ser1078–Ser1088. Low complexity predominate over residues Ala1097–Met1117. Residues Ser1121–Leu1131 show a composition bias toward basic residues. Cys1128 carries the cysteine methyl ester modification. The S-farnesyl cysteine moiety is linked to residue Cys1128. Positions Ala1129–Leu1131 are cleaved as a propeptide — removed in mature form.

This sequence belongs to the cyclic nucleotide phosphodiesterase family. As to quaternary structure, interacts with PrBP. Requires a divalent metal cation as cofactor.

The protein resides in the cell membrane. The catalysed reaction is 3',5'-cyclic GMP + H2O = GMP + H(+). Has a role regulating cGMP transport in Malpighian tubule principal cells. This chain is cGMP-specific 3',5'-cyclic phosphodiesterase, found in Drosophila erecta (Fruit fly).